The chain runs to 1145 residues: Nucleolar protein 6 (1145 aa).

The interval 1–46 (MQKKRNRAGPPQQEAASDDGEMSDSSDKMEVAQGKGKSAVKRAPDA) is disordered.

The protein belongs to the NRAP family. As to quaternary structure, part of the small subunit (SSU) processome, composed of more than 70 proteins and the RNA chaperone small nucleolar RNA (snoRNA) U3.

It is found in the nucleus. The protein localises to the nucleolus. The protein resides in the chromosome. In terms of biological role, part of the small subunit (SSU) processome, first precursor of the small eukaryotic ribosomal subunit. During the assembly of the SSU processome in the nucleolus, many ribosome biogenesis factors, an RNA chaperone and ribosomal proteins associate with the nascent pre-rRNA and work in concert to generate RNA folding, modifications, rearrangements and cleavage as well as targeted degradation of pre-ribosomal RNA by the RNA exosome. The chain is Nucleolar protein 6 (nol6) from Xenopus tropicalis (Western clawed frog).